The following is a 185-amino-acid chain: Alkyl hydroperoxide reductase AhpD (185 aa).

The Proton donor role is filled by cysteine 132. Cysteines 132 and 135 form a disulfide. Residue cysteine 135 is the Cysteine sulfenic acid (-SOH) intermediate of the active site.

It belongs to the AhpD family.

It carries out the reaction N(6)-[(R)-dihydrolipoyl]-L-lysyl-[lipoyl-carrier protein] + a hydroperoxide = N(6)-[(R)-lipoyl]-L-lysyl-[lipoyl-carrier protein] + an alcohol + H2O. Functionally, antioxidant protein with alkyl hydroperoxidase activity. Required for the reduction of the AhpC active site cysteine residues and for the regeneration of the AhpC enzyme activity. The sequence is that of Alkyl hydroperoxide reductase AhpD from Anaeromyxobacter sp. (strain Fw109-5).